Reading from the N-terminus, the 478-residue chain is Divinyl ether synthase CYP74D2 (478 aa).

A heme-binding site is contributed by cysteine 431.

It belongs to the cytochrome P450 family. 9-divinyl ether synthase subfamily. Expressed in roots.

The enzyme catalyses (9S)-hydroperoxy-(10E,12Z)-octadecadienoate = colneleate + H2O. It catalyses the reaction (9S)-hydroperoxy-(10E,12Z,15Z)-octadecatrienoate = colnelenate + H2O. Involved in the biosynthesis of the anti-fungal and antibacterial toxins colneleate and colnelenate. Can use (9S)-hydroperoxy-(10E,12Z)-octadecadienoate (9-HPOD) and (9S)-hydroperoxy-(10E,12Z,15Z)-octadecatrienoate (9-HPOT) as substrates but has no activity with the corresponding 13-hydroperoxides (13-HPOD and 13-HPOT). This Solanum tuberosum (Potato) protein is Divinyl ether synthase CYP74D2.